The following is an 88-amino-acid chain: Phosphocarrier protein HPr (88 aa).

The 88-residue stretch at 1-88 (MKKFQAVIKD…KACLEKNKVI (88 aa)) folds into the HPr domain. His-15 acts as the Pros-phosphohistidine intermediate in catalysis. The residue at position 47 (Ser-47) is a Phosphoserine; by HPrK/P.

It belongs to the HPr family.

It is found in the cytoplasm. With respect to regulation, phosphorylation on Ser-47 inhibits the phosphoryl transfer from enzyme I to HPr. In terms of biological role, general (non sugar-specific) component of the phosphoenolpyruvate-dependent sugar phosphotransferase system (sugar PTS). This major carbohydrate active-transport system catalyzes the phosphorylation of incoming sugar substrates concomitantly with their translocation across the cell membrane. The phosphoryl group from phosphoenolpyruvate (PEP) is transferred to the phosphoryl carrier protein HPr by enzyme I. Phospho-HPr then transfers it to the PTS EIIA domain. Functionally, P-Ser-HPr interacts with the catabolite control protein A (CcpA), forming a complex that binds to DNA at the catabolite response elements cre, operator sites preceding a large number of catabolite-regulated genes. Thus, P-Ser-HPr is a corepressor in carbon catabolite repression (CCR), a mechanism that allows bacteria to coordinate and optimize the utilization of available carbon sources. P-Ser-HPr also plays a role in inducer exclusion, in which it probably interacts with several non-PTS permeases and inhibits their transport activity. The chain is Phosphocarrier protein HPr (ptsH) from Mycoplasma genitalium (strain ATCC 33530 / DSM 19775 / NCTC 10195 / G37) (Mycoplasmoides genitalium).